A 184-amino-acid chain; its full sequence is dCTP deaminase (184 aa).

Lys107–Arg112 contributes to the dCTP binding site. Glu133 serves as the catalytic Proton donor/acceptor. Positions 152, 166, and 176 each coordinate dCTP.

It belongs to the dCTP deaminase family. Homotrimer.

It catalyses the reaction dCTP + H2O + H(+) = dUTP + NH4(+). It functions in the pathway pyrimidine metabolism; dUMP biosynthesis; dUMP from dCTP (dUTP route): step 1/2. Catalyzes the deamination of dCTP to dUTP. This chain is dCTP deaminase, found in Granulibacter bethesdensis (strain ATCC BAA-1260 / CGDNIH1).